A 241-amino-acid chain; its full sequence is Tryptophan synthase alpha chain (241 aa).

Residues Glu-31 and Asp-42 each act as proton acceptor in the active site.

Belongs to the TrpA family. Tetramer of two alpha and two beta chains.

The catalysed reaction is (1S,2R)-1-C-(indol-3-yl)glycerol 3-phosphate + L-serine = D-glyceraldehyde 3-phosphate + L-tryptophan + H2O. It participates in amino-acid biosynthesis; L-tryptophan biosynthesis; L-tryptophan from chorismate: step 5/5. Functionally, the alpha subunit is responsible for the aldol cleavage of indoleglycerol phosphate to indole and glyceraldehyde 3-phosphate. The protein is Tryptophan synthase alpha chain of Staphylococcus saprophyticus subsp. saprophyticus (strain ATCC 15305 / DSM 20229 / NCIMB 8711 / NCTC 7292 / S-41).